We begin with the raw amino-acid sequence, 111 residues long: Large ribosomal subunit protein eL30 (111 aa).

The protein belongs to the eukaryotic ribosomal protein eL30 family.

In Oryza sativa subsp. japonica (Rice), this protein is Large ribosomal subunit protein eL30 (RPL30).